A 61-amino-acid polypeptide reads, in one-letter code: Large ribosomal subunit protein bL28 (61 aa).

This sequence belongs to the bacterial ribosomal protein bL28 family.

This Lactobacillus gasseri (strain ATCC 33323 / DSM 20243 / BCRC 14619 / CIP 102991 / JCM 1131 / KCTC 3163 / NCIMB 11718 / NCTC 13722 / AM63) protein is Large ribosomal subunit protein bL28.